Here is a 117-residue protein sequence, read N- to C-terminus: Aspartate 1-decarboxylase (117 aa).

Serine 25 functions as the Schiff-base intermediate with substrate; via pyruvic acid in the catalytic mechanism. Serine 25 is modified (pyruvic acid (Ser)). Threonine 57 is a substrate binding site. The Proton donor role is filled by tyrosine 58. Substrate is bound at residue 73 to 75 (GAA).

Belongs to the PanD family. As to quaternary structure, heterooctamer of four alpha and four beta subunits. The cofactor is pyruvate. In terms of processing, is synthesized initially as an inactive proenzyme, which is activated by self-cleavage at a specific serine bond to produce a beta-subunit with a hydroxyl group at its C-terminus and an alpha-subunit with a pyruvoyl group at its N-terminus.

It localises to the cytoplasm. The enzyme catalyses L-aspartate + H(+) = beta-alanine + CO2. It functions in the pathway cofactor biosynthesis; (R)-pantothenate biosynthesis; beta-alanine from L-aspartate: step 1/1. Functionally, catalyzes the pyruvoyl-dependent decarboxylation of aspartate to produce beta-alanine. This is Aspartate 1-decarboxylase from Bacteroides thetaiotaomicron (strain ATCC 29148 / DSM 2079 / JCM 5827 / CCUG 10774 / NCTC 10582 / VPI-5482 / E50).